Consider the following 290-residue polypeptide: uncharacterized protein (290 aa).

This is an uncharacterized protein from Escherichia coli (strain K12).